The primary structure comprises 447 residues: NAC domain containing protein 50 (447 aa).

Residues M1–A21 are disordered. The NAC domain occupies L27–K178. A DNA-binding region spans residues L126 to P184. 2 disordered regions span residues D246–A303 and K371–V392. Residues T281 to P293 are compositionally biased toward basic and acidic residues. Positions V392–S447 form a coiled coil.

As to quaternary structure, interacts with JMJ14 and NAC052. In terms of tissue distribution, mostly expressed in floral organs, and, at low levels, in other organs.

It is found in the nucleus. Transcriptional repressor that binds to the motif 5'-(C/T)A(C/A)G-3' in the promoter of target genes. Also binds to the 5'-CTTGNNNNNCAAG-3' consensus sequence in chromatin. Can bind to the mitochondrial dysfunction motif (MDM) present in the upstream regions of mitochondrial dysfunction stimulon (MDS) genes involved in mitochondrial retrograde regulation (MRR). Together with NAC051/NAC052 and JMJ14, regulates gene expression and flowering time by associating with the histone demethylase JMJ14, probably by the promotion of RNA-mediated gene silencing. The protein is NAC domain containing protein 50 of Arabidopsis thaliana (Mouse-ear cress).